The following is a 220-amino-acid chain: 7-cyano-7-deazaguanine synthase (220 aa).

10–20 contacts ATP; that stretch reads FSGGQDSTTCL. Zn(2+)-binding residues include C186, C195, C198, and C201.

It belongs to the QueC family. Homodimer. Requires Zn(2+) as cofactor.

It carries out the reaction 7-carboxy-7-deazaguanine + NH4(+) + ATP = 7-cyano-7-deazaguanine + ADP + phosphate + H2O + H(+). It participates in purine metabolism; 7-cyano-7-deazaguanine biosynthesis. Its function is as follows. Catalyzes the ATP-dependent conversion of 7-carboxy-7-deazaguanine (CDG) to 7-cyano-7-deazaguanine (preQ(0)). This is 7-cyano-7-deazaguanine synthase from Bacillus cereus (strain G9842).